The primary structure comprises 217 residues: Monomethylamine corrinoid protein 2 (217 aa).

Positions M1–E91 constitute a B12-binding N-terminal domain. In terms of domain architecture, B12-binding spans T93–K217. H106 provides a ligand contact to methylcob(III)alamin.

Belongs to the methylamine corrinoid protein family. As to quaternary structure, can form a complex with MtmB.

Its pathway is one-carbon metabolism; methanogenesis from methylamine. Its function is as follows. Acts as a methyl group carrier between MtmB and MtbA. The chain is Monomethylamine corrinoid protein 2 (mtmC2) from Methanosarcina acetivorans (strain ATCC 35395 / DSM 2834 / JCM 12185 / C2A).